The following is a 251-amino-acid chain: Haloacid dehalogenase-like hydrolase domain-containing protein 3 (251 aa).

Lys15 carries the post-translational modification N6-acetyllysine; alternate. The residue at position 15 (Lys15) is an N6-succinyllysine; alternate.

The protein belongs to the HAD-like hydrolase superfamily.

This is Haloacid dehalogenase-like hydrolase domain-containing protein 3 (HDHD3) from Homo sapiens (Human).